Here is a 342-residue protein sequence, read N- to C-terminus: MASDAAAEPSSGVTHPPRYVIGYALAPKKQQSFIQPSLVAQAASRGMDLVPVDASQPLAEQGPFHLLIHKLYGDDWRAQLVAFAARHPAVPIVDPPHAIDRLHNRISMLQVVSELDHAADQDSTFGIPSQVVVYDAAALADFGLLAALRFPLIAKPLVADGTAKSHKMSLVYHREGLGKLRPPLVLQEFVNHGGVIFKVYVVGGHVTCVKRRSLPDVSPEDDASAQGSVSFSQVSNLPTERTAEEYYGEKSLEDAVVPPAAFINQIAGGLRRALGLQLFNFDMIRDVRAGDRYLVIDINYFPGYAKMPGYETVLTDFFWEMVHKDGVGNQQEEKGANHVVVK.

Residues Lys28 and Lys70 each coordinate 1D-myo-inositol 6-phosphate. ATP-binding residues include Arg105 and Lys155. The ATP-grasp domain occupies 116–332; sequence DHAADQDSTF…HKDGVGNQQE (217 aa). Gly161 and His166 together coordinate 1D-myo-inositol 6-phosphate. 3 residues coordinate ATP: His166, Gln187, and Val190. Lys198 and Tyr200 together coordinate 1D-myo-inositol 6-phosphate. Ser213 contributes to the ATP binding site. The segment at 219-247 is catalytic specificity elements (CSE); sequence PEDDASAQGSVSFSQVSNLPTERTAEEYY. Asn280 contacts 1D-myo-inositol 6-phosphate. Mg(2+) is bound at residue Asp282. Residues Ile296, Asp297, and Asn299 each contribute to the ATP site. Residues Asp297 and Asn299 each coordinate Mg(2+). Residues Asn299, Gly303, and Lys306 each coordinate 1D-myo-inositol 6-phosphate.

Belongs to the ITPK1 family. Monomer. Requires Mg(2+) as cofactor. In terms of tissue distribution, expressed in the embryo of 15 day after pollination. Expressed in kernels at earlier stages but at very low levels. Expression in the embryo peaks at 15 days after pollination and then declines. No expression is detected from endosperm and vegetative tissues.

The catalysed reaction is 1D-myo-inositol 3,4,5,6-tetrakisphosphate + ATP = 1D-myo-inositol 1,3,4,5,6-pentakisphosphate + ADP + H(+). It carries out the reaction 1D-myo-inositol 1,3,4-trisphosphate + ATP = 1D-myo-inositol 1,3,4,5-tetrakisphosphate + ADP + H(+). It catalyses the reaction 1D-myo-inositol 1,3,4-trisphosphate + ATP = 1D-myo-inositol 1,3,4,6-tetrakisphosphate + ADP + H(+). The enzyme catalyses 1D-myo-inositol 1,2,3,4,5-pentakisphosphate + ATP = 3-diphospho-1D-myo-inositol 1,2,4,5-tetrakisphosphate + ADP. The catalysed reaction is 1D-myo-inositol hexakisphosphate + ATP = 5-diphospho-1D-myo-inositol 1,2,3,4,6-pentakisphosphate + ADP. Kinase that can phosphorylate various inositol polyphosphate such as Ins(3,4,5,6)P4 or Ins(1,3,4)P3 and participates in phytic acid biosynthesis in developing seeds. Phosphorylates Ins(3,4,5,6)P4 at position 1 to form Ins(1,3,4,5,6)P5. This reaction is thought to have regulatory importance, since Ins(3,4,5,6)P4 is an inhibitor of plasma membrane Ca(2+)-activated Cl(-) channels, while Ins(1,3,4,5,6)P5 is not. Also phosphorylates Ins(1,3,4)P3 on O-5 and O-6 to form Ins(1,3,4,6)P4, an essential molecule in the hexakisphosphate (InsP6) pathway. Also able to phosphorylate Ins(3,5,6)P3 but not Ins(1,4,5)P3, Ins(2,4,5)P3, Ins(1,3,4,6)P4 nor Ins(1,3,5,6)P4. Has higher specific activity on Ins(3,4,5,6)P4 than Ins(1,3,4)P3 and Ins(3,5,6)P3. Can also could use Ins(1,2,5,6)P4 as a substrate. Able to add a beta-phosphate to the 3 positions of Ins(1,2,3,4,5)P5 and to add beta-phosphate to InsP6 to yield 5-InsP7, thus exhibiting InsP6 kinase activity. Also has Ins(1,3,4,5,6)P5 phosphatase activity. This is Inositol-tetrakisphosphate 1-kinase 1 from Zea mays (Maize).